The sequence spans 68 residues: Beta-defensin 1 (68 aa).

Positions 1-21 (MRTSYLLLFTLCLLLSEIASG) are cleaved as a signal peptide. The propeptide occupies 22 to 32 (GNFLTGLGHRS). Cystine bridges form between C37-C66, C44-C59, and C49-C67.

It belongs to the beta-defensin family. In terms of assembly, monomer. Homodimer.

Its subcellular location is the secreted. The protein localises to the membrane. In terms of biological role, has bactericidal activity. May act as a ligand for C-C chemokine receptor CCR6. Positively regulates the sperm motility and bactericidal activity in a CCR6-dependent manner. Binds to CCR6 and triggers Ca2+ mobilization in the sperm which is important for its motility. The protein is Beta-defensin 1 (DEFB1) of Gorilla gorilla gorilla (Western lowland gorilla).